A 145-amino-acid polypeptide reads, in one-letter code: RxLR effector protein BLR40 (145 aa).

A signal peptide spans 1–22 (MLLSRAISVVALLACICCGVHT). Positions 44–58 (RRLRTSVDLVDNEER) match the RxLR-dEER motif.

This sequence belongs to the RxLR effector family.

The protein resides in the secreted. It is found in the host cell membrane. Functionally, secreted effector that triggers a robust hypersensitive response (HR) in Lactuca sativa cv. Design that is resistant to multiple B.lactucae races, including Bl:24. This chain is RxLR effector protein BLR40, found in Bremia lactucae (Lettuce downy mildew).